The following is a 288-amino-acid chain: ATP synthase gamma chain (288 aa).

It belongs to the ATPase gamma chain family. F-type ATPases have 2 components, CF(1) - the catalytic core - and CF(0) - the membrane proton channel. CF(1) has five subunits: alpha(3), beta(3), gamma(1), delta(1), epsilon(1). CF(0) has three main subunits: a, b and c.

The protein resides in the cell membrane. Its function is as follows. Produces ATP from ADP in the presence of a proton gradient across the membrane. The gamma chain is believed to be important in regulating ATPase activity and the flow of protons through the CF(0) complex. This is ATP synthase gamma chain from Bacillus pumilus (strain SAFR-032).